Here is a 127-residue protein sequence, read N- to C-terminus: Ribosome-binding factor A (127 aa).

Belongs to the RbfA family. In terms of assembly, monomer. Binds 30S ribosomal subunits, but not 50S ribosomal subunits or 70S ribosomes.

It localises to the cytoplasm. Functionally, one of several proteins that assist in the late maturation steps of the functional core of the 30S ribosomal subunit. Associates with free 30S ribosomal subunits (but not with 30S subunits that are part of 70S ribosomes or polysomes). Required for efficient processing of 16S rRNA. May interact with the 5'-terminal helix region of 16S rRNA. In Chloroflexus aggregans (strain MD-66 / DSM 9485), this protein is Ribosome-binding factor A.